The chain runs to 1086 residues: Calcium-transporting ATPase 9, plasma membrane-type (1086 aa).

A compositionally biased stretch (low complexity) spans 1 to 15 (MSTSSSNGLLLTSMS). Positions 1 to 50 (MSTSSSNGLLLTSMSGRHDDMEAGSAKTEEHSDHEELQHDPDDPFDIDNT) are disordered. Residues 1–194 (MSTSSSNGLL…NTYPKKKGKN (194 aa)) lie on the Cytoplasmic side of the membrane. Over residues 16-42 (GRHDDMEAGSAKTEEHSDHEELQHDPD) the composition is skewed to basic and acidic residues. Positions 57 to 68 (SLRRWRQAALVL) are interaction with calmodulin. Residues 195-215 (FFMFLWEAWQDLTLIILIIAA) form a helical membrane-spanning segment. Residues 216 to 233 (VTSLALGIKTEGLKEGWL) are Lumenal-facing. Residues 234-254 (DGGSIAFAVLLVIVVTAVSDY) form a helical membrane-spanning segment. Residues 255 to 382 (RQSLQFQNLN…GEETPLQVRL (128 aa)) lie on the Cytoplasmic side of the membrane. A helical membrane pass occupies residues 383–402 (NGLATFIGIVGLSVALVVLV). The Lumenal portion of the chain corresponds to 403–439 (ALLVRYFTGTTQDTNGATQFIKGTTSISDIVDDCVKI). The helical transmembrane segment at 440–457 (FTIAVTIVVVAVPEGLPL) threads the bilayer. Topologically, residues 458 to 857 (AVTLTLAYSM…RWGRSVYANI (400 aa)) are cytoplasmic. The active-site 4-aspartylphosphate intermediate is the aspartate 495. Aspartate 802 and aspartate 806 together coordinate Mg(2+). A helical transmembrane segment spans residues 858 to 876 (QKFIQFQLTVNVAALIINV). Residues 877–887 (VAAMSSGDVPL) lie on the Lumenal side of the membrane. Residues 888 to 908 (KAVQLLWVNLIMDTLGALALA) traverse the membrane as a helical segment. Residues 909–928 (TEPPTDHLMHRTPVGRREPL) lie on the Cytoplasmic side of the membrane. A helical membrane pass occupies residues 929 to 951 (ITNIMWRNLLVQSFYQVAVLLVL). Residues 952-963 (NFAGLSILGLNH) are Lumenal-facing. Residues 964–988 (ENHAHAVEVKNTMIFNAFVMCQIFN) form a helical membrane-spanning segment. Topologically, residues 989–1006 (EFNARKPDEMNVFRGVNK) are cytoplasmic. Residues 1007-1028 (NPLFVAIVGVTFILQIIIVTFL) traverse the membrane as a helical segment. Over 1029–1038 (GKFAHTVRLG) the chain is Lumenal. Residues 1039–1060 (WQLWLASIIIGLVSWPLAIVGK) form a helical membrane-spanning segment. Residues 1061 to 1086 (LIPVPKTPMSVYFKKPFRKYKASRNA) lie on the Cytoplasmic side of the membrane.

The protein belongs to the cation transport ATPase (P-type) (TC 3.A.3) family. Type IIB subfamily.

The protein resides in the membrane. The enzyme catalyses Ca(2+)(in) + ATP + H2O = Ca(2+)(out) + ADP + phosphate + H(+). Its activity is regulated as follows. Activated by calmodulin. In terms of biological role, this magnesium-dependent enzyme catalyzes the hydrolysis of ATP coupled with the translocation of calcium from the cytosol out of the cell or into organelles. The protein is Calcium-transporting ATPase 9, plasma membrane-type (ACA9) of Arabidopsis thaliana (Mouse-ear cress).